Consider the following 318-residue polypeptide: NADH-ubiquinone oxidoreductase chain 1 (318 aa).

8 helical membrane-spanning segments follow: residues 2 to 22 (FMAN…FLTL), 69 to 89 (MLYL…WTPL), 98 to 118 (FNLG…SILW), 140 to 160 (ISYE…SGSF), 171 to 191 (HSWL…STLA), 222 to 242 (LFFM…TTIF), 253 to 273 (ETYS…FLWI), and 285 to 305 (LMHL…MWYI).

The protein belongs to the complex I subunit 1 family. Core subunit of respiratory chain NADH dehydrogenase (Complex I) which is composed of 45 different subunits.

It localises to the mitochondrion inner membrane. The catalysed reaction is a ubiquinone + NADH + 5 H(+)(in) = a ubiquinol + NAD(+) + 4 H(+)(out). Core subunit of the mitochondrial membrane respiratory chain NADH dehydrogenase (Complex I) which catalyzes electron transfer from NADH through the respiratory chain, using ubiquinone as an electron acceptor. Essential for the catalytic activity and assembly of complex I. This Saguinus leucopus (Silvery-brown bare-face tamarin) protein is NADH-ubiquinone oxidoreductase chain 1 (MT-ND1).